Reading from the N-terminus, the 565-residue chain is Sensor histidine kinase YpdA (565 aa).

The Cytoplasmic portion of the chain corresponds to 1–3 (MHE). Residues 4–24 (IFNMLLAVFDRAALMLICLFF) form a helical membrane-spanning segment. The Periplasmic segment spans residues 25-45 (LIRIRLFRELLHKSAHSPKEL). A helical transmembrane segment spans residues 46-66 (LAVTAIFSLFALFSTWSGVPV). Over 67–74 (EGSLVNVR) the chain is Cytoplasmic. Residues 75–95 (IIAVMSGGILFGPWVGIITGV) traverse the membrane as a helical segment. Residues 96-107 (IAGIHRYLIDIG) are Periplasmic-facing. Residues 108–128 (GVTAIPCFITSILAGCISGWI) traverse the membrane as a helical segment. Over 129–139 (NLKIPKAQRWR) the chain is Cytoplasmic. The helical transmembrane segment at 140-160 (VGILGGMLCETLTMILVIVWA) threads the bilayer. Over 161-172 (PTTALGIDIVSK) the chain is Periplasmic. A helical membrane pass occupies residues 173-193 (IGIPMILGSVCIGFIVLLVQS). The Cytoplasmic segment spans residues 194 to 565 (VEGEKEASAA…PVASQATLLL (372 aa)). Residues 223-342 (VNSESLRKVC…AVGLSQIIST (120 aa)) form the GAF domain. Residues 343-554 (QLEVSRAEQL…EIAFYIPNQR (212 aa)) enclose the Histidine kinase domain. His-371 is modified (phosphohistidine; by autocatalysis).

As to quaternary structure, interacts with BtsT and YhjX. Post-translationally, autophosphorylated.

It is found in the cell inner membrane. The catalysed reaction is ATP + protein L-histidine = ADP + protein N-phospho-L-histidine.. In terms of biological role, member of the two-component regulatory system YpdA/YpdB, which is part of a nutrient-sensing regulatory network composed of YpdA/YpdB, the high-affinity pyruvate signaling system BtsS/BtsR and their respective target proteins, YhjX and BtsT. YpdA activates YpdB by phosphorylation in response to high concentrations of extracellular pyruvate. Activation of the YpdA/YpdB signaling cascade also promotes BtsS/BtsR-mediated btsT expression. The chain is Sensor histidine kinase YpdA (ypdA) from Escherichia coli (strain K12).